Consider the following 262-residue polypeptide: Thiazole synthase (262 aa).

K97 (schiff-base intermediate with DXP) is an active-site residue. Residues G158, 185–186 (AG), and 207–208 (NT) each bind 1-deoxy-D-xylulose 5-phosphate.

This sequence belongs to the ThiG family. In terms of assembly, homotetramer. Forms heterodimers with either ThiH or ThiS.

The protein localises to the cytoplasm. It catalyses the reaction [ThiS sulfur-carrier protein]-C-terminal-Gly-aminoethanethioate + 2-iminoacetate + 1-deoxy-D-xylulose 5-phosphate = [ThiS sulfur-carrier protein]-C-terminal Gly-Gly + 2-[(2R,5Z)-2-carboxy-4-methylthiazol-5(2H)-ylidene]ethyl phosphate + 2 H2O + H(+). Its pathway is cofactor biosynthesis; thiamine diphosphate biosynthesis. In terms of biological role, catalyzes the rearrangement of 1-deoxy-D-xylulose 5-phosphate (DXP) to produce the thiazole phosphate moiety of thiamine. Sulfur is provided by the thiocarboxylate moiety of the carrier protein ThiS. In vitro, sulfur can be provided by H(2)S. In Neisseria gonorrhoeae (strain ATCC 700825 / FA 1090), this protein is Thiazole synthase.